A 134-amino-acid chain; its full sequence is Small ribosomal subunit protein uS8c (134 aa).

The protein belongs to the universal ribosomal protein uS8 family. In terms of assembly, part of the 30S ribosomal subunit.

Its subcellular location is the plastid. The protein resides in the chloroplast. In terms of biological role, one of the primary rRNA binding proteins, it binds directly to 16S rRNA central domain where it helps coordinate assembly of the platform of the 30S subunit. The sequence is that of Small ribosomal subunit protein uS8c (rps8) from Helianthus annuus (Common sunflower).